The primary structure comprises 429 residues: UDP-N-acetylglucosamine 1-carboxyvinyltransferase (429 aa).

Residue 22 to 23 participates in phosphoenolpyruvate binding; it reads KN. R102 contributes to the UDP-N-acetyl-alpha-D-glucosamine binding site. The Proton donor role is filled by C126. C126 bears the 2-(S-cysteinyl)pyruvic acid O-phosphothioketal mark. Residues 131–135, D316, and I338 each bind UDP-N-acetyl-alpha-D-glucosamine; that span reads RPVDL.

Belongs to the EPSP synthase family. MurA subfamily.

It localises to the cytoplasm. It carries out the reaction phosphoenolpyruvate + UDP-N-acetyl-alpha-D-glucosamine = UDP-N-acetyl-3-O-(1-carboxyvinyl)-alpha-D-glucosamine + phosphate. It functions in the pathway cell wall biogenesis; peptidoglycan biosynthesis. In terms of biological role, cell wall formation. Adds enolpyruvyl to UDP-N-acetylglucosamine. The polypeptide is UDP-N-acetylglucosamine 1-carboxyvinyltransferase (Rhodopseudomonas palustris (strain BisA53)).